The primary structure comprises 435 residues: Asparagine--tRNA ligase (435 aa).

This sequence belongs to the class-II aminoacyl-tRNA synthetase family. In terms of assembly, homodimer.

The protein localises to the cytoplasm. It carries out the reaction tRNA(Asn) + L-asparagine + ATP = L-asparaginyl-tRNA(Asn) + AMP + diphosphate + H(+). This Leptospira interrogans serogroup Icterohaemorrhagiae serovar Lai (strain 56601) protein is Asparagine--tRNA ligase.